Reading from the N-terminus, the 168-residue chain is Microtubule-associated protein Jupiter (168 aa).

Positions 1 to 14 are enriched in polar residues; it reads MISNFDCTDNQASS. A disordered region spans residues 1–33; the sequence is MISNFDCTDNQASSKVLRPPGGGSSDIFGSEMP. Ser24 carries the post-translational modification Phosphoserine. Residue Thr35 is modified to Phosphothreonine. Basic and acidic residues predominate over residues 76-87; the sequence is RGQKTVDSHSRL. Disordered stretches follow at residues 76-106 and 124-168; these read RGQK…KSSI and NGHY…GAGK. A phosphothreonine mark is found at Thr92 and Thr96. Residues Ser105, Ser133, and Ser144 each carry the phosphoserine modification. The span at 131–144 shows a compositional bias: low complexity; sequence SGSVSSASSSVSSS. Residues 145–155 show a composition bias toward polar residues; sequence TENLKMNSGSR.

Belongs to the MAP Jupiter family.

Its subcellular location is the nucleus. It is found in the cytoplasm. The protein resides in the cytoskeleton. The protein localises to the spindle. In terms of biological role, binds to all microtubule populations. This is Microtubule-associated protein Jupiter from Drosophila simulans (Fruit fly).